The primary structure comprises 61 residues: Transmembrane protein 300R (61 aa).

2 consecutive transmembrane segments (helical) span residues 5–25 (FLDLYMILSVLAGVIGIFYLT) and 35–55 (SLSYYMTLSVVTGILALIYLQ).

It is found in the membrane. This is Transmembrane protein 300R from Invertebrate iridescent virus 6 (IIV-6).